The sequence spans 25 residues: Small ribosomal subunit protein eS32 (25 aa).

Positions 1-25 (MRAKWRKKRVRRLKRKRRKVRARSK) are disordered.

Belongs to the eukaryotic ribosomal protein eS32 family. In terms of assembly, component of the small ribosomal subunit.

This Eremothecium gossypii (strain ATCC 10895 / CBS 109.51 / FGSC 9923 / NRRL Y-1056) (Yeast) protein is Small ribosomal subunit protein eS32 (RPL41).